We begin with the raw amino-acid sequence, 479 residues long: Catalase A (479 aa).

Polar residues predominate over residues 1–21 (MSKILTTASGAPVADNQNSRS). Residues 1-25 (MSKILTTASGAPVADNQNSRSAGPR) form a disordered region. Catalysis depends on residues His-53 and Asn-126. Tyr-336 is a heme binding site. A disordered region spans residues 350 to 376 (QLPVNAPRCPVNSYQRDGSMATGSYGS). Over residues 361–376 (NSYQRDGSMATGSYGS) the composition is skewed to polar residues.

The protein belongs to the catalase family. Requires heme as cofactor.

It carries out the reaction 2 H2O2 = O2 + 2 H2O. Activated by peroxide. Its function is as follows. The major expressed catalase protein in strain Corvallis in stationary phase. Decomposes hydrogen peroxide into water and oxygen; serves to protect cells from the toxic effects of hydrogen peroxide. The chain is Catalase A (katA) from Pseudomonas putida (Arthrobacter siderocapsulatus).